An 883-amino-acid polypeptide reads, in one-letter code: Phosphoenolpyruvate carboxylase (883 aa).

Residues H138 and K546 contribute to the active site.

The protein belongs to the PEPCase type 1 family. Mg(2+) is required as a cofactor.

The enzyme catalyses oxaloacetate + phosphate = phosphoenolpyruvate + hydrogencarbonate. Forms oxaloacetate, a four-carbon dicarboxylic acid source for the tricarboxylic acid cycle. The sequence is that of Phosphoenolpyruvate carboxylase from Salmonella arizonae (strain ATCC BAA-731 / CDC346-86 / RSK2980).